A 250-amino-acid chain; its full sequence is Proteasome subunit alpha type-2 (250 aa).

Residue K108 forms a Glycyl lysine isopeptide (Lys-Gly) (interchain with G-Cter in ubiquitin) linkage.

This sequence belongs to the peptidase T1A family. The 26S proteasome consists of a 20S proteasome core and two 19S regulatory subunits. The 20S proteasome core is composed of 28 subunits that are arranged in four stacked rings, resulting in a barrel-shaped structure. The two end rings are each formed by seven alpha subunits, and the two central rings are each formed by seven beta subunits. The catalytic chamber with the active sites is on the inside of the barrel.

The protein resides in the cytoplasm. It is found in the nucleus. The proteasome degrades poly-ubiquitinated proteins in the cytoplasm and in the nucleus. It is essential for the regulated turnover of proteins and for the removal of misfolded proteins. The proteasome is a multicatalytic proteinase complex that is characterized by its ability to cleave peptides with Arg, Phe, Tyr, Leu, and Glu adjacent to the leaving group at neutral or slightly basic pH. It has an ATP-dependent proteolytic activity. The polypeptide is Proteasome subunit alpha type-2 (PRE8) (Saccharomyces cerevisiae (strain ATCC 204508 / S288c) (Baker's yeast)).